The following is a 1331-amino-acid chain: X-linked retinitis pigmentosa GTPase regulator-interacting protein 1 (1331 aa).

3 disordered regions span residues 1-165 (MQHL…PPAF), 183-220 (SQLT…SEEC), and 351-374 (HQPL…LPPQ). Basic and acidic residues predominate over residues 41 to 67 (NQKELNCRRLHLHEEPTLVKEPSPKQR). Polar residues-rich tracts occupy residues 77 to 86 (VQRSTTTQPD) and 183 to 193 (SQLTHTMTTDS). Positions 194 to 220 (THVEEIPRSPEKTSKVEKPEQRSSEEC) are enriched in basic and acidic residues. 2 coiled-coil regions span residues 236–352 (ELIR…SSHQ) and 498–546 (MCYQ…LRSH). Residues 351-367 (HQPLDSSHQPHWSTELT) show a composition bias toward polar residues. Residues 745–870 (GARKVQSNES…AQNKSIKGDF (126 aa)) form the C2 domain. Disordered stretches follow at residues 899-1057 (FQMS…VQDK) and 1088-1146 (AEDG…SDDI). The stretch at 908–999 (EGEEKEEEGG…DVLEASFTEE (92 aa)) forms a coiled coil. The segment covering 910–988 (EEKEEEGGEE…EEEEEEEDEN (79 aa)) has biased composition (acidic residues). 2 stretches are compositionally biased toward basic and acidic residues: residues 1022-1039 (PEKR…REHQ) and 1088-1115 (AEDG…EHPS). Residues 1129–1141 (CEQASEVSETQTT) are compositionally biased toward polar residues. The interval 1136–1326 (SETQTTDSDD…ALHGIYKEMT (191 aa)) is interaction with RPGR.

This sequence belongs to the RPGRIP1 family. In terms of assembly, interacts with NPHP4. Interacts with NEK4. Forms homodimers and elongated homopolymers. Interacts with RPGR. Interacts with SPATA7. Interacts with CEP290/NPHP6; mediating the association between RPGR and CEP290/NPHP6. In terms of tissue distribution, expressed in the retina (at protein level).

The protein localises to the cell projection. It localises to the cilium. In terms of biological role, may function as scaffolding protein. Required for normal location of RPGR at the connecting cilium of photoreceptor cells. Required for normal disk morphogenesis and disk organization in the outer segment of photoreceptor cells and for survival of photoreceptor cells. In Mus musculus (Mouse), this protein is X-linked retinitis pigmentosa GTPase regulator-interacting protein 1 (Rpgrip1).